Here is a 205-residue protein sequence, read N- to C-terminus: ATP-dependent Clp protease proteolytic subunit 2 (205 aa).

Ser100 (nucleophile) is an active-site residue. The active site involves His125.

Belongs to the peptidase S14 family. In terms of assembly, fourteen ClpP subunits assemble into 2 heptameric rings which stack back to back to give a disk-like structure with a central cavity, resembling the structure of eukaryotic proteasomes.

It is found in the cytoplasm. It catalyses the reaction Hydrolysis of proteins to small peptides in the presence of ATP and magnesium. alpha-casein is the usual test substrate. In the absence of ATP, only oligopeptides shorter than five residues are hydrolyzed (such as succinyl-Leu-Tyr-|-NHMec, and Leu-Tyr-Leu-|-Tyr-Trp, in which cleavage of the -Tyr-|-Leu- and -Tyr-|-Trp bonds also occurs).. Cleaves peptides in various proteins in a process that requires ATP hydrolysis. Has a chymotrypsin-like activity. Plays a major role in the degradation of misfolded proteins. This Chlamydia abortus (strain DSM 27085 / S26/3) (Chlamydophila abortus) protein is ATP-dependent Clp protease proteolytic subunit 2.